The following is a 419-amino-acid chain: Glycine, glutamate and proline-rich protein (419 aa).

A signal peptide spans 1–16; sequence MKCLVALFLSLSLVAC. The segment at 74 to 152 is disordered; the sequence is VERESEEAEG…VDMCAGESRR (79 aa). The segment covering 76 to 85 has biased composition (acidic residues); that stretch reads RESEEAEGEG. Over residues 86–130 the composition is skewed to basic and acidic residues; it reads TDGRGGGEGEREGWGGEREGGEGEREGGEGEREGREGEREGKSSE.

In the C-terminal section; belongs to the glycosyl hydrolase 23 family. Component of the acid-insoluble organic matrix of calcified layers of the shell (at protein level).

It is found in the secreted. This Lottia gigantea (Giant owl limpet) protein is Glycine, glutamate and proline-rich protein.